A 29-amino-acid chain; its full sequence is Cytochrome b6-f complex subunit 8 (29 aa).

The chain crosses the membrane as a helical span at residues 3–23 (IITFGWVAVAAFFALSIAFVV).

Belongs to the PetN family. As to quaternary structure, the 4 large subunits of the cytochrome b6-f complex are cytochrome b6, subunit IV (17 kDa polypeptide, PetD), cytochrome f and the Rieske protein, while the 4 small subunits are PetG, PetL, PetM and PetN. The complex functions as a dimer.

Its subcellular location is the cellular thylakoid membrane. In terms of biological role, component of the cytochrome b6-f complex, which mediates electron transfer between photosystem II (PSII) and photosystem I (PSI), cyclic electron flow around PSI, and state transitions. The sequence is that of Cytochrome b6-f complex subunit 8 from Synechococcus sp. (strain JA-3-3Ab) (Cyanobacteria bacterium Yellowstone A-Prime).